A 599-amino-acid chain; its full sequence is Fumarate reductase flavoprotein subunit (599 aa).

FAD is bound by residues 12 to 16 (GAGGG), 36 to 38 (VSK), 44 to 52 (THTVAAEGG), 156 to 158 (HFV), and aspartate 212. Residue histidine 45 is modified to Tele-8alpha-FAD histidine. Catalysis depends on residues histidine 233 and arginine 249. Residues 357 to 358 (HY), glutamate 381, and 392 to 398 (RLGSNSL) contribute to the FAD site.

The protein belongs to the FAD-dependent oxidoreductase 2 family. FRD/SDH subfamily. Part of an enzyme complex containing four subunits: a flavoprotein (FrdA), an iron-sulfur protein (FrdB), and two hydrophobic anchor proteins (FrdC and FrdD). It depends on FAD as a cofactor.

The protein localises to the cell inner membrane. The enzyme catalyses a quinone + succinate = fumarate + a quinol. The catalysed reaction is a menaquinone + succinate = a menaquinol + fumarate. This Haemophilus influenzae (strain ATCC 51907 / DSM 11121 / KW20 / Rd) protein is Fumarate reductase flavoprotein subunit (frdA).